The primary structure comprises 480 residues: Ribulose bisphosphate carboxylase large chain (480 aa).

Positions 1–2 are excised as a propeptide; it reads MS. At P3 the chain carries N-acetylproline. At K14 the chain carries N6,N6,N6-trimethyllysine. Substrate contacts are provided by N123 and T173. K175 acts as the Proton acceptor in catalysis. Substrate is bound at residue K177. 3 residues coordinate Mg(2+): K201, D203, and E204. K201 bears the N6-carboxylysine mark. Residue H294 is the Proton acceptor of the active site. The substrate site is built by R295, H327, and S379.

The protein belongs to the RuBisCO large chain family. Type I subfamily. Heterohexadecamer of 8 large chains and 8 small chains; disulfide-linked. The disulfide link is formed within the large subunit homodimers. Mg(2+) is required as a cofactor. Post-translationally, the disulfide bond which can form in the large chain dimeric partners within the hexadecamer appears to be associated with oxidative stress and protein turnover.

It localises to the plastid. Its subcellular location is the chloroplast. The enzyme catalyses 2 (2R)-3-phosphoglycerate + 2 H(+) = D-ribulose 1,5-bisphosphate + CO2 + H2O. The catalysed reaction is D-ribulose 1,5-bisphosphate + O2 = 2-phosphoglycolate + (2R)-3-phosphoglycerate + 2 H(+). Its function is as follows. RuBisCO catalyzes two reactions: the carboxylation of D-ribulose 1,5-bisphosphate, the primary event in carbon dioxide fixation, as well as the oxidative fragmentation of the pentose substrate in the photorespiration process. Both reactions occur simultaneously and in competition at the same active site. The protein is Ribulose bisphosphate carboxylase large chain of Acorus calamus var. americanus (American sweet flag).